Here is a 479-residue protein sequence, read N- to C-terminus: UDP-N-acetylmuramate--L-alanine ligase (479 aa).

Residue 128–134 (GAHGKTT) coordinates ATP.

The protein belongs to the MurCDEF family.

It is found in the cytoplasm. It catalyses the reaction UDP-N-acetyl-alpha-D-muramate + L-alanine + ATP = UDP-N-acetyl-alpha-D-muramoyl-L-alanine + ADP + phosphate + H(+). It functions in the pathway cell wall biogenesis; peptidoglycan biosynthesis. Cell wall formation. The chain is UDP-N-acetylmuramate--L-alanine ligase from Psychrobacter cryohalolentis (strain ATCC BAA-1226 / DSM 17306 / VKM B-2378 / K5).